The primary structure comprises 1639 residues: Mediator of RNA polymerase II transcription subunit 14 (1639 aa).

Positions 49 to 53 match the LXXLL motif 1 motif; that stretch reads LAELL. 2 disordered regions span residues 561 to 586 and 709 to 755; these read GQSP…GSDS and LPQP…KTVH. Positions 575–586 are enriched in low complexity; sequence SAAGGPAPGSDS. Residues 711 to 721 are compositionally biased toward pro residues; the sequence is QPKPPQAPPTP. The segment covering 722-748 has biased composition (low complexity); it reads QQQQQQQQQQQQPGTSDAKSSGAGASA. The LXXLL motif 2 signature appears at 768-772; sequence LKRLL. Disordered stretches follow at residues 1039–1243 and 1558–1639; these read RRSQ…HHYT and MQPG…GGPN. Composition is skewed to gly residues over residues 1062 to 1088 and 1122 to 1142; these read GNNG…GTGM and IGGG…GQGG. Over residues 1189-1201 the composition is skewed to polar residues; sequence GPSSLSYMQSHTD. A compositionally biased stretch (pro residues) spans 1219-1229; that stretch reads PGMPRPSPRPG. The segment covering 1558 to 1579 has biased composition (gly residues); that stretch reads MQPGGGPGVPGGPGGPMGGQIG. Residues 1589 to 1603 show a composition bias toward low complexity; the sequence is VGSSPSPMMHSPMQQ. Residues 1604-1639 are compositionally biased toward gly residues; sequence MGGGGPQPGAYGGMVGGPGGGPQSGGPVGGGPGGPN.

Belongs to the Mediator complex subunit 14 family. Component of the Mediator complex.

It localises to the nucleus. Its function is as follows. Component of the Mediator complex, a coactivator involved in the regulated transcription of nearly all RNA polymerase II-dependent genes. Mediator functions as a bridge to convey information from gene-specific regulatory proteins to the basal RNA polymerase II transcription machinery. Mediator is recruited to promoters by direct interactions with regulatory proteins and serves as a scaffold for the assembly of a functional preinitiation complex with RNA polymerase II and the general transcription factors. The protein is Mediator of RNA polymerase II transcription subunit 14 (MED14) of Anopheles gambiae (African malaria mosquito).